The following is a 374-amino-acid chain: Zinc finger CCCH domain-containing protein 15 homolog (374 aa).

2 consecutive C3H1-type zinc fingers follow at residues 89–116 and 167–197; these read DPKS…HDLA and YFLE…HCLP.

This sequence belongs to the ZC3H15/TMA46 family.

This chain is Zinc finger CCCH domain-containing protein 15 homolog, found in Caenorhabditis briggsae.